A 198-amino-acid chain; its full sequence is Recombination protein RecR (198 aa).

The C4-type zinc-finger motif lies at Cys57–Cys72. Positions Glu80–Ala175 constitute a Toprim domain.

This sequence belongs to the RecR family.

May play a role in DNA repair. It seems to be involved in an RecBC-independent recombinational process of DNA repair. It may act with RecF and RecO. This Streptococcus equi subsp. equi (strain 4047) protein is Recombination protein RecR.